An 83-amino-acid polypeptide reads, in one-letter code: Small ribosomal subunit protein eS21 (83 aa).

It belongs to the eukaryotic ribosomal protein eS21 family. As to quaternary structure, component of the 40S small ribosomal subunit.

The protein localises to the cytoplasm. It localises to the cytosol. Its subcellular location is the rough endoplasmic reticulum. This is Small ribosomal subunit protein eS21 (RpS21) from Biphyllus lunatus (Beetle).